The primary structure comprises 132 residues: Phosphoribosyl-AMP cyclohydrolase (132 aa).

Aspartate 79 provides a ligand contact to Mg(2+). Residue cysteine 80 participates in Zn(2+) binding. Mg(2+) contacts are provided by aspartate 81 and aspartate 83. Positions 100 and 107 each coordinate Zn(2+).

The protein belongs to the PRA-CH family. Homodimer. Mg(2+) serves as cofactor. It depends on Zn(2+) as a cofactor.

Its subcellular location is the cytoplasm. The catalysed reaction is 1-(5-phospho-beta-D-ribosyl)-5'-AMP + H2O = 1-(5-phospho-beta-D-ribosyl)-5-[(5-phospho-beta-D-ribosylamino)methylideneamino]imidazole-4-carboxamide. Its pathway is amino-acid biosynthesis; L-histidine biosynthesis; L-histidine from 5-phospho-alpha-D-ribose 1-diphosphate: step 3/9. In terms of biological role, catalyzes the hydrolysis of the adenine ring of phosphoribosyl-AMP. This chain is Phosphoribosyl-AMP cyclohydrolase, found in Acidovorax sp. (strain JS42).